We begin with the raw amino-acid sequence, 176 residues long: Interleukin-7 (176 aa).

Residues 1-25 form the signal peptide; the sequence is MFHVSFRYIFGIPPLILVLLPVASS. Cystine bridges form between Cys27–Cys165, Cys58–Cys153, and Cys71–Cys116. Residues Asn94, Asn115, and Asn140 are each glycosylated (N-linked (GlcNAc...) asparagine). Residues 118 to 143 form a disordered region; the sequence is SKGKGRKPPSLSEAQPTKNLEENKSS.

The protein belongs to the IL-7/IL-9 family. Interacts with IL7R and CSF2RG.

It localises to the secreted. Its function is as follows. Hematopoietic cytokine that plays an essential role in the development, expansion, and survival of naive and memory T-cells and B-cells thereby regulating the number of mature lymphocytes and maintaining lymphoid homeostasis. Mechanistically, exerts its biological effects through a receptor composed of IL7RA subunit and the cytokine receptor common subunit gamma/CSF2RG. Binding to the receptor leads to activation of various kinases including JAK1 or JAK3 depending on the cell type and subsequently propagation of signals through activation of several downstream signaling pathways including the PI3K/Akt/mTOR or the JAK-STAT5. The sequence is that of Interleukin-7 (IL7) from Bos taurus (Bovine).